Consider the following 899-residue polypeptide: Plasma membrane ATPase (899 aa).

The disordered stretch occupies residues 1–72; it reads MSAATEPTKE…TDPSYGLTSD (72 aa). At 1–96 the chain is on the cytoplasmic side; the sequence is MSAATEPTKE…SEETENLFVK (96 aa). The span at 17–29 shows a compositional bias: acidic residues; the sequence is DSDDEDEDIDQLI. A helical membrane pass occupies residues 97-117; that stretch reads FLMFFIGPIQFVMEAAAILAA. Residues 118–121 lie on the Extracellular side of the membrane; that stretch reads GLED. Residues 122 to 141 traverse the membrane as a helical segment; that stretch reads WVDFGVICGLLFLNAAVGFI. Residues 142-272 are Cytoplasmic-facing; that stretch reads QEYQAGSIVD…GSGHFTEVLN (131 aa). Residues 273–294 form a helical membrane-spanning segment; that stretch reads GIGTILLILVIVTLLLVWVASF. At 295–305 the chain is on the extracellular side; sequence YRTNKIVRILR. Residues 306–328 form a helical membrane-spanning segment; the sequence is YTLAITIVGVPVGLPAVVTTTMA. The Cytoplasmic segment spans residues 329–700; sequence VGAAYLAKKQ…IAILNRSLNI (372 aa). Asp359 functions as the 4-aspartylphosphate intermediate in the catalytic mechanism. The Mg(2+) site is built by Asp615 and Asp619. The chain crosses the membrane as a helical span at residues 701–719; it reads DLVVFIAIFADVATLAIAY. The Extracellular portion of the chain corresponds to 720 to 735; sequence DNAPYSPKPVKWNLRR. Residues 736 to 755 form a helical membrane-spanning segment; the sequence is LWGMSVILGIILAIGTWITL. Topologically, residues 756–805 are cytoplasmic; that stretch reads TTMFVPKGGIIQNFGSIDGVLFLQISLTENWLIFITRAAGPFWSSIPSWQ. The helical transmembrane segment at 806 to 826 threads the bilayer; that stretch reads LSGAVLIVDIIATMFCLFGWW. The Extracellular portion of the chain corresponds to 827–838; sequence SQNWNDIVTVVR. A helical membrane pass occupies residues 839–855; it reads VWIFSFGVFCVMGGAYY. The Cytoplasmic portion of the chain corresponds to 856–899; that stretch reads MMSESEAFDRFMNGKSRRDKPSGRSVEDFLMAMQRVSTQHEKEN.

Belongs to the cation transport ATPase (P-type) (TC 3.A.3) family. Type IIIA subfamily.

The protein localises to the cell membrane. The enzyme catalyses ATP + H2O + H(+)(in) = ADP + phosphate + 2 H(+)(out). Its activity is regulated as follows. Activated by high pH or also by potassium ions when the medium pH is low. Its function is as follows. The plasma membrane ATPase of plants and fungi is a hydrogen ion pump. The proton gradient it generates drives the active transport of nutrients by H(+)-symport. The resulting external acidification and/or internal alkinization may mediate growth responses. The protein is Plasma membrane ATPase (PMA1) of Kluyveromyces lactis (strain ATCC 8585 / CBS 2359 / DSM 70799 / NBRC 1267 / NRRL Y-1140 / WM37) (Yeast).